The primary structure comprises 258 residues: MFEARLLQASLLKKILESIKDLVESANFDCSPEGISLQAMDGTHVTLINLVLRNEGFETYNCDRSLSLGLSLVSLSKILKCAGNDDTLTIRARDNESDTVTFVFESPKNDRVSDFEIKLIDIKNEQYSIRKSDYSAVIKMPSAELQRICRDLSIIGEIVTISANKEGVKFSVSGDSGSGNITIKPTSDSDVPAEQATVIESKEPVVLNFALKFLSNFTKATPLSPMVTLSMSEGIPVVVEYKIDDLGFLGFFLAPKIE.

Residues 61 to 80 mediate DNA binding; sequence NCDRSLSLGLSLVSLSKILK.

It belongs to the PCNA family. In terms of assembly, homotrimer. Forms a complex with activator 1 heteropentamer in the presence of ATP.

It localises to the nucleus. This protein is an auxiliary protein of DNA polymerase delta and is involved in the control of eukaryotic DNA replication by increasing the polymerase's processibility during elongation of the leading strand. This Dictyostelium discoideum (Social amoeba) protein is Proliferating cell nuclear antigen (pcna).